The chain runs to 357 residues: 3-dehydroquinate synthase (357 aa).

NAD(+)-binding positions include 104–108 (GVVGD), 128–129 (TT), Lys141, and 168–171 (FLET). Zn(2+) is bound by residues Glu183, His243, and His260.

Belongs to the sugar phosphate cyclases superfamily. Dehydroquinate synthase family. It depends on NAD(+) as a cofactor. Requires Co(2+) as cofactor. The cofactor is Zn(2+).

Its subcellular location is the cytoplasm. It catalyses the reaction 7-phospho-2-dehydro-3-deoxy-D-arabino-heptonate = 3-dehydroquinate + phosphate. It functions in the pathway metabolic intermediate biosynthesis; chorismate biosynthesis; chorismate from D-erythrose 4-phosphate and phosphoenolpyruvate: step 2/7. In terms of biological role, catalyzes the conversion of 3-deoxy-D-arabino-heptulosonate 7-phosphate (DAHP) to dehydroquinate (DHQ). In Streptococcus pyogenes serotype M3 (strain ATCC BAA-595 / MGAS315), this protein is 3-dehydroquinate synthase.